The following is a 74-amino-acid chain: Anionic peptide clone 10 (74 aa).

An N-terminal signal peptide occupies residues 1-24 (MVSKSLIVLLLVSVLVSTFFTTEA).

The protein belongs to the non-disulfide-bridged peptide (NDBP) superfamily. Long chain multifunctional peptide (group 2) family. As to expression, expressed by the venom gland.

The protein resides in the secreted. Functionally, may be an antimicrobial peptide. The sequence is that of Anionic peptide clone 10 from Tityus costatus (Brazilian scorpion).